Consider the following 108-residue polypeptide: Hydrogenase expression/formation protein HupN (108 aa).

The interval 88 to 108 is disordered; that stretch reads REPQLPPHLQAQLPPKEPNSP.

Belongs to the HupF/HypC family.

This is Hydrogenase expression/formation protein HupN (hupN) from Azotobacter chroococcum mcd 1.